The following is a 604-amino-acid chain: Aspartate--tRNA(Asp/Asn) ligase (604 aa).

An L-aspartate-binding site is contributed by Glu168. The interval 192-195 (QLFK) is aspartate. Position 214 (Arg214) interacts with L-aspartate. ATP-binding positions include 214–216 (RDE) and Gln223. His446 serves as a coordination point for L-aspartate. Glu480 provides a ligand contact to ATP. Residue Arg487 participates in L-aspartate binding. 532 to 535 (GWDR) contacts ATP. The tract at residues 575–604 (LEAGVDARPKPEARAQAGTAGPAAPVADPT) is disordered. The segment covering 577–587 (AGVDARPKPEA) has biased composition (basic and acidic residues). Low complexity predominate over residues 588–604 (RAQAGTAGPAAPVADPT).

Belongs to the class-II aminoacyl-tRNA synthetase family. Type 1 subfamily. As to quaternary structure, homodimer.

The protein resides in the cytoplasm. The enzyme catalyses tRNA(Asx) + L-aspartate + ATP = L-aspartyl-tRNA(Asx) + AMP + diphosphate. Aspartyl-tRNA synthetase with relaxed tRNA specificity since it is able to aspartylate not only its cognate tRNA(Asp) but also tRNA(Asn). Reaction proceeds in two steps: L-aspartate is first activated by ATP to form Asp-AMP and then transferred to the acceptor end of tRNA(Asp/Asn). This Salinispora arenicola (strain CNS-205) protein is Aspartate--tRNA(Asp/Asn) ligase.